We begin with the raw amino-acid sequence, 432 residues long: Probable imidazolonepropionase (432 aa).

Y159 and H192 together coordinate 4-imidazolone-5-propanoate. Y159 contacts N-formimidoyl-L-glutamate. H260 lines the Fe(3+) pocket. H260 serves as a coordination point for Zn(2+). E263 contacts 4-imidazolone-5-propanoate. D334 is a Fe(3+) binding site. A Zn(2+)-binding site is contributed by D334. Residue N336 coordinates N-formimidoyl-L-glutamate.

Belongs to the metallo-dependent hydrolases superfamily. HutI family. The cofactor is Zn(2+). Requires Fe(3+) as cofactor.

It carries out the reaction 4-imidazolone-5-propanoate + H2O = N-formimidoyl-L-glutamate. The protein operates within amino-acid degradation; L-histidine degradation into L-glutamate; N-formimidoyl-L-glutamate from L-histidine: step 3/3. This is Probable imidazolonepropionase (amdhd1) from Xenopus tropicalis (Western clawed frog).